A 59-amino-acid polypeptide reads, in one-letter code: Large ribosomal subunit protein bL32 (59 aa).

Residues 1–59 (MAVQQNKKSPSKRGMHRAHDFLTTPPLAVESTTGEAHLRHHISPAGFYRGKKVTKGKGE) are disordered. Positions 49–59 (RGKKVTKGKGE) are enriched in basic residues.

The protein belongs to the bacterial ribosomal protein bL32 family.

The chain is Large ribosomal subunit protein bL32 from Dechloromonas aromatica (strain RCB).